Reading from the N-terminus, the 1112-residue chain is cGMP-inhibited 3',5'-cyclic phosphodiesterase 3B (1112 aa).

The segment covering 1-10 (MRRDERDAKA) has biased composition (basic and acidic residues). Residues 1–25 (MRRDERDAKAMRSLQPPDGAGSPPE) form an interaction with RAPGEF3 region. The tract at residues 1 to 26 (MRRDERDAKAMRSLQPPDGAGSPPES) is disordered. The residue at position 13 (Ser-13) is a Phosphoserine. Helical transmembrane passes span 88-108 (FVLA…AAWL), 117-137 (HSLS…CFLT), 152-172 (WWLL…WQWW), 192-212 (AAAG…TLAH), 220-240 (VLVL…LGSL), and 247-267 (LLSG…DHFF). Ser-295 bears the Phosphoserine; by PKB/AKT1 or PKB/AKT2 mark. Ser-296 and Ser-442 each carry phosphoserine. Positions 418–471 (EKGDRKLNKGLNRNSLPTPQLRRSSGTSGLLPVEQSSRWDRNNGKRPHQEFGIS) are disordered. Over residues 428–445 (LNRNSLPTPQLRRSSGTS) the composition is skewed to polar residues. Residues 436–460 (PQLRRSSGTSGLLPVEQSSRWDRNN) form an interaction with PIK3R6 region. Positions 454-466 (SRWDRNNGKRPHQ) are enriched in basic and acidic residues. The 429-residue stretch at 651–1079 (TNIEQEVSLD…KIWKEIVEEE (429 aa)) folds into the PDEase domain. The active-site Proton donor is His-737. His-737 is a binding site for AMP. Residues His-741, His-821, Asp-822, and Asp-937 each coordinate Mg(2+). Positions 822, 937, and 988 each coordinate AMP. Composition is skewed to acidic residues over residues 1017–1041 (EEDN…EEME) and 1103–1112 (QVIEEADEEE). Disordered regions lie at residues 1017 to 1051 (EEDN…PPRR) and 1092 to 1112 (ENSS…DEEE).

It belongs to the cyclic nucleotide phosphodiesterase family. PDE3 subfamily. Homodimer. Interacts with PIK3CG; regulates PDE3B activity and thereby cAMP levels in cells. Interacts with RAPGEF3 and PIK3R6; form a signaling complex that regulates phosphatidylinositol 3-kinase gamma in angiogenesis. Interacts with ABHD15; this interaction regulates PDE3B's stability and expression and, thereby, impacts the antilipolytic action of insulin. The cofactor is Mg(2+). Requires Mn(2+) as cofactor. Phosphorylation at Ser-295 mediates insulin-induced activation of PDE3B. Abundant in adipose tissues.

The protein resides in the membrane. The enzyme catalyses a nucleoside 3',5'-cyclic phosphate + H2O = a nucleoside 5'-phosphate + H(+). It catalyses the reaction 3',5'-cyclic AMP + H2O = AMP + H(+). It carries out the reaction 3',5'-cyclic GMP + H2O = GMP + H(+). With respect to regulation, inhibited by cGMP. In terms of biological role, cyclic nucleotide phosphodiesterase with a dual-specificity for the second messengers cAMP and cGMP, which are key regulators of many important physiological process. Regulates angiogenesis by inhibiting the cAMP-dependent guanine nucleotide exchange factor RAPGEF3 and downstream phosphatidylinositol 3-kinase gamma-mediated signaling. Controls cardiac contractility by reducing cAMP concentration in cardiocytes. This chain is cGMP-inhibited 3',5'-cyclic phosphodiesterase 3B, found in Homo sapiens (Human).